Here is a 199-residue protein sequence, read N- to C-terminus: Alkyl hydroperoxide reductase C (199 aa).

The region spanning Val-2–Phe-163 is the Thioredoxin domain. Residue Cys-50 is the Cysteine sulfenic acid (-SOH) intermediate of the active site.

The protein belongs to the peroxiredoxin family. AhpC/Prx1 subfamily. In terms of assembly, homodimer; disulfide-linked, upon oxidation. 5 homodimers assemble to form a ring-like decamer.

It localises to the cytoplasm. It carries out the reaction a hydroperoxide + NADH + H(+) = an alcohol + NAD(+) + H2O. Its function is as follows. Thiol-specific peroxidase that catalyzes the reduction of hydrogen peroxide and organic hydroperoxides to water and alcohols, respectively. Plays a role in cell protection against oxidative stress by detoxifying peroxides. This chain is Alkyl hydroperoxide reductase C, found in Buchnera aphidicola subsp. Baizongia pistaciae (strain Bp).